We begin with the raw amino-acid sequence, 106 residues long: Nucleoid-associated protein Abu_0429 (106 aa).

The protein belongs to the YbaB/EbfC family. As to quaternary structure, homodimer.

The protein resides in the cytoplasm. It is found in the nucleoid. Functionally, binds to DNA and alters its conformation. May be involved in regulation of gene expression, nucleoid organization and DNA protection. This chain is Nucleoid-associated protein Abu_0429, found in Aliarcobacter butzleri (strain RM4018) (Arcobacter butzleri).